Reading from the N-terminus, the 324-residue chain is Holliday junction branch migration complex subunit RuvB (324 aa).

The tract at residues 1 to 180 (MKSISCGKEY…FGIPLHLEFY (180 aa)) is large ATPase domain (RuvB-L). Residues Ile-19, Arg-20, Gly-61, Lys-64, Thr-65, Thr-66, 127 to 129 (EDF), Arg-170, Tyr-180, and Arg-217 each bind ATP. Thr-65 contacts Mg(2+). Positions 181-251 (SFEELVNIIK…VADSVLLKLG (71 aa)) are small ATPAse domain (RuvB-S). A head domain (RuvB-H) region spans residues 254–324 (KMGLNKLDMN…TDQAKEYLSL (71 aa)). The DNA site is built by Arg-307 and Arg-312.

It belongs to the RuvB family. Homohexamer. Forms an RuvA(8)-RuvB(12)-Holliday junction (HJ) complex. HJ DNA is sandwiched between 2 RuvA tetramers; dsDNA enters through RuvA and exits via RuvB. An RuvB hexamer assembles on each DNA strand where it exits the tetramer. Each RuvB hexamer is contacted by two RuvA subunits (via domain III) on 2 adjacent RuvB subunits; this complex drives branch migration. In the full resolvosome a probable DNA-RuvA(4)-RuvB(12)-RuvC(2) complex forms which resolves the HJ.

Its subcellular location is the cytoplasm. It catalyses the reaction ATP + H2O = ADP + phosphate + H(+). Functionally, the RuvA-RuvB-RuvC complex processes Holliday junction (HJ) DNA during genetic recombination and DNA repair, while the RuvA-RuvB complex plays an important role in the rescue of blocked DNA replication forks via replication fork reversal (RFR). RuvA specifically binds to HJ cruciform DNA, conferring on it an open structure. The RuvB hexamer acts as an ATP-dependent pump, pulling dsDNA into and through the RuvAB complex. RuvB forms 2 homohexamers on either side of HJ DNA bound by 1 or 2 RuvA tetramers; 4 subunits per hexamer contact DNA at a time. Coordinated motions by a converter formed by DNA-disengaged RuvB subunits stimulates ATP hydrolysis and nucleotide exchange. Immobilization of the converter enables RuvB to convert the ATP-contained energy into a lever motion, pulling 2 nucleotides of DNA out of the RuvA tetramer per ATP hydrolyzed, thus driving DNA branch migration. The RuvB motors rotate together with the DNA substrate, which together with the progressing nucleotide cycle form the mechanistic basis for DNA recombination by continuous HJ branch migration. Branch migration allows RuvC to scan DNA until it finds its consensus sequence, where it cleaves and resolves cruciform DNA. This Wolbachia sp. subsp. Drosophila simulans (strain wRi) protein is Holliday junction branch migration complex subunit RuvB.